We begin with the raw amino-acid sequence, 372 residues long: Fatty acid 2-hydroxylase (372 aa).

One can recognise a Cytochrome b5 heme-binding domain in the interval 8–86 (AASFTPAEVQ…LEQYYVGELR (79 aa)). Heme contacts are provided by His-43 and His-69. Helical transmembrane passes span 168–188 (VWYS…WSYY) and 213–233 (SVFI…EYVI). In terms of domain architecture, Fatty acid hydroxylase spans 219–361 (FVLGMLFWTF…TKLWDYFFHT (143 aa)). His-234, His-239, His-257, His-260, and His-261 together coordinate Zn(2+). 2 helical membrane-spanning segments follow: residues 268–288 (SRLV…YVFL) and 290–310 (LILP…GYVL). Residues His-315, His-319, His-336, His-339, and His-340 each contribute to the Zn(2+) site.

The protein belongs to the sterol desaturase family. SCS7 subfamily. Zn(2+) is required as a cofactor. In terms of tissue distribution, expressed in brain (at protein level). Detected in cerebellum and forebrain. Expression in the white matter is mainly restricted in oligodendrocytes. Expressed in stomach, kidney, skin and testis. Expressed in sebaceous gland.

It is found in the endoplasmic reticulum membrane. The protein localises to the microsome membrane. It catalyses the reaction a 1,2-saturated fatty acid + 2 Fe(II)-[cytochrome b5] + O2 + 2 H(+) = a (R)-2-hydroxy fatty acid + 2 Fe(III)-[cytochrome b5] + H2O. The enzyme catalyses hexadecanoate + 2 Fe(II)-[cytochrome b5] + O2 + 2 H(+) = (R)-2-hydroxyhexadecanoate + 2 Fe(III)-[cytochrome b5] + H2O. It carries out the reaction octadecanoate + 2 Fe(II)-[cytochrome b5] + O2 + 2 H(+) = (R)-2-hydroxyoctadecanoate + 2 Fe(III)-[cytochrome b5] + H2O. The catalysed reaction is docosanoate + 2 Fe(II)-[cytochrome b5] + O2 + 2 H(+) = 2-hydroxydocosanoate + 2 Fe(III)-[cytochrome b5] + H2O. It catalyses the reaction tetracosanoate + 2 Fe(II)-[cytochrome b5] + O2 + 2 H(+) = (R)-2-hydroxytetracosanoate + 2 Fe(III)-[cytochrome b5] + H2O. Its pathway is sphingolipid metabolism; galactosylceramide biosynthesis. It functions in the pathway lipid metabolism; fatty acid metabolism. Functionally, catalyzes the hydroxylation of free fatty acids at the C-2 position to produce 2-hydroxy fatty acids, which are building blocks of sphingolipids and glycosphingolipids common in neural tissue and epidermis. FA2H is stereospecific for the production of (R)-2-hydroxy fatty acids. Plays an essential role in the synthesis of galactosphingolipids of the myelin sheath. Responsible for the synthesis of sphingolipids and glycosphingolipids involved in the formation of epidermal lamellar bodies critical for skin permeability barrier. Participates in the synthesis of glycosphingolipids and a fraction of type II wax diesters in sebaceous gland, specifically regulating hair follicle homeostasis. Involved in the synthesis of sphingolipids of plasma membrane rafts, controlling lipid raft mobility and trafficking of raft-associated proteins. The chain is Fatty acid 2-hydroxylase from Mus musculus (Mouse).